Consider the following 373-residue polypeptide: uncharacterized protein (373 aa).

Belongs to the glycosyltransferase 28 family.

This is an uncharacterized protein from Bacillus subtilis (strain 168).